Reading from the N-terminus, the 186-residue chain is Nucleoside triphosphate pyrophosphatase (186 aa).

Catalysis depends on Asp-68, which acts as the Proton acceptor.

This sequence belongs to the Maf family. A divalent metal cation serves as cofactor.

It localises to the cytoplasm. It catalyses the reaction a ribonucleoside 5'-triphosphate + H2O = a ribonucleoside 5'-phosphate + diphosphate + H(+). It carries out the reaction a 2'-deoxyribonucleoside 5'-triphosphate + H2O = a 2'-deoxyribonucleoside 5'-phosphate + diphosphate + H(+). Functionally, nucleoside triphosphate pyrophosphatase. May have a dual role in cell division arrest and in preventing the incorporation of modified nucleotides into cellular nucleic acids. This chain is Nucleoside triphosphate pyrophosphatase, found in Prochlorococcus marinus (strain MIT 9303).